The chain runs to 135 residues: Regulator of ribonuclease activity B (135 aa).

The disordered stretch occupies residues 114-135; that stretch reads WGTYFESDEDDEEDESEDKPEA. Over residues 119 to 135 the composition is skewed to acidic residues; the sequence is ESDEDDEEDESEDKPEA.

Belongs to the RraB family. As to quaternary structure, interacts with the C-terminal region of Rne.

It localises to the cytoplasm. Its function is as follows. Globally modulates RNA abundance by binding to RNase E (Rne) and regulating its endonucleolytic activity. Can modulate Rne action in a substrate-dependent manner by altering the composition of the degradosome. This chain is Regulator of ribonuclease activity B, found in Photobacterium profundum (strain SS9).